We begin with the raw amino-acid sequence, 225 residues long: Glucosyl-3-phosphoglycerate phosphatase (225 aa).

R10 is a binding site for substrate. The active-site Tele-phosphohistidine intermediate is the H11. R60 serves as a coordination point for substrate. The Proton donor/acceptor role is filled by E84. H158 is a binding site for substrate.

The protein belongs to the phosphoglycerate mutase family. In terms of assembly, homodimer.

The catalysed reaction is (2R)-2-O-(alpha-D-glucopyranosyl)-3-phospho-glycerate + H2O = (2R)-2-O-(alpha-D-glucopyranosyl)-glycerate + phosphate. Its function is as follows. Involved in the biosynthesis of mycobacterial methylglucose lipopolysaccharides (MGLP). Catalyzes the dephosphorylation of glucosyl-3-phosphoglycerate (GPG) to glucosylglycerate. The sequence is that of Glucosyl-3-phosphoglycerate phosphatase from Mycolicibacterium vanbaalenii (strain DSM 7251 / JCM 13017 / BCRC 16820 / KCTC 9966 / NRRL B-24157 / PYR-1) (Mycobacterium vanbaalenii).